A 1304-amino-acid polypeptide reads, in one-letter code: Angiotensin-converting enzyme (1304 aa).

The first 27 residues, 1–27, serve as a signal peptide directing secretion; that stretch reads MGAASGRRGPGLLLPLLLLLPPQPALA. Over 28–1257 the chain is Extracellular; it reads LDPGLQPGNF…LDAQQARVGQ (1230 aa). N-linked (GlcNAc...) asparagine glycans are attached at residues asparagine 36, asparagine 52, asparagine 72, asparagine 109, asparagine 144, and asparagine 158. 2 consecutive Peptidase M2 domains span residues 38-622 and 641-1220; these read SADE…LGWP and VTDE…LGWP. Cysteine 155 and cysteine 163 are oxidised to a cystine. Tyrosine 229 lines the chloride pocket. Residue asparagine 316 is glycosylated (N-linked (GlcNAc...) asparagine). A disulfide bridge connects residues cysteine 357 and cysteine 375. Histidine 388 is a binding site for Zn(2+). Glutamate 389 (proton acceptor 1) is an active-site residue. The Zn(2+) site is built by histidine 392 and glutamate 416. N-linked (GlcNAc...) asparagine glycans are attached at residues asparagine 440, asparagine 443, and asparagine 507. The Proton donor 1 role is filled by histidine 518. Arginine 527 lines the chloride pocket. Cysteine 543 and cysteine 555 are disulfide-bonded. An N-linked (GlcNAc...) asparagine glycan is attached at asparagine 675. N-linked (GlcNAc...) (complex) asparagine glycosylation is found at asparagine 693 and asparagine 712. A disulfide bond links cysteine 755 and cysteine 761. An N-linked (GlcNAc...) asparagine glycan is attached at asparagine 758. 2 residues coordinate chloride: arginine 789 and tyrosine 827. The N-linked (GlcNAc...) asparagine glycan is linked to asparagine 940. A disulfide bridge connects residues cysteine 955 and cysteine 973. Histidine 986 serves as a coordination point for Zn(2+). The Proton acceptor 2 role is filled by glutamate 987. Zn(2+) contacts are provided by histidine 990 and glutamate 1014. Chloride-binding residues include tryptophan 1088 and arginine 1092. The active-site Proton donor 2 is the histidine 1116. Residue arginine 1125 participates in chloride binding. Cysteines 1141 and 1153 form a disulfide. Residue asparagine 1189 is glycosylated (N-linked (GlcNAc...) asparagine). A juxtamembrane stalk region spans residues 1213–1254; the sequence is HGEKLGWPQYNWTPNSARSEGPLPDSGRVSFLGLDLDAQQAR. The chain crosses the membrane as a helical span at residues 1258 to 1274; it reads WLLLFLGIALLVATLGL. Residues 1275–1304 are Cytoplasmic-facing; sequence SQRLFSIRHRSLHRHSHGPQFDSEVELRHS. Serine 1297 carries the phosphoserine modification.

This sequence belongs to the peptidase M2 family. As to quaternary structure, monomer and homodimer; homodimerizes following binding to an inhibitor. Interacts with calmodulin (CALM1, CALM2 or CALM3); interaction takes place in the cytoplasmic region and regulates phosphorylation and proteolytic cleavage. Zn(2+) serves as cofactor. Requires chloride as cofactor. In terms of processing, produced following proteolytic cleavage by secretase enzymes that cleave the transmembrane form in the juxtamembrane stalk region upstream of the transmembrane region. Cleavage can take place at different sites of the juxtamembrane stalk region. Phosphorylated by CK2 on Ser-1297; which allows membrane retention. Phosphorylated on tyrosine residues on its extracellular part, promoting cleavage by secretase enzymes and formation of the soluble form (Angiotensin-converting enzyme, soluble form).

It localises to the cell membrane. The protein localises to the cytoplasm. It is found in the secreted. It catalyses the reaction Release of a C-terminal dipeptide, oligopeptide-|-Xaa-Yaa, when Xaa is not Pro, and Yaa is neither Asp nor Glu. Thus, conversion of angiotensin I to angiotensin II, with increase in vasoconstrictor activity, but no action on angiotensin II.. The enzyme catalyses angiotensin I + H2O = L-histidyl-L-leucine + angiotensin II. The catalysed reaction is bradykinin + H2O = L-Phe-L-Arg + bradykinin(1-7). It carries out the reaction substance P + H2O = substance P(1-9) + L-Leu-L-Met-NH2. It catalyses the reaction substance P + H2O = substance P(1-8) + Gly-L-Leu-L-Met-NH2. The enzyme catalyses substance P + H2O = L-Phe-L-Phe-Gly-L-Leu-L-Met-NH2 + substance P(1-6). The catalysed reaction is neurotensin + H2O = neurotensin(1-11) + L-isoleucyl-L-leucine. It carries out the reaction goralatide + H2O = N-acetyl-L-seryl-L-aspartate + L-lysyl-L-proline. It catalyses the reaction Met-enkephalin + H2O = L-phenylalanyl-L-methionine + L-tyrosylglycylglycine. The enzyme catalyses Leu-enkephalin + H2O = L-tyrosylglycylglycine + L-phenylalanyl-L-leucine. The catalysed reaction is Met-enkephalin-Arg-Phe + H2O = L-arginyl-L-phenylalanine + Met-enkephalin. The dipeptidyl carboxypeptidase activity is strongly activated by chloride. The dipeptidyl carboxypeptidase activity is specifically inhibited by lisinopril, captopril and enalaprilat. Its activity is regulated as follows. Strongly inhibited by lisinopril and captopril. Functionally, dipeptidyl carboxypeptidase that removes dipeptides from the C-terminus of a variety of circulating hormones, such as angiotensin I, bradykinin or enkephalins, thereby playing a key role in the regulation of blood pressure, electrolyte homeostasis or synaptic plasticity. Composed of two similar catalytic domains, each possessing a functional active site, with different selectivity for substrates. Plays a major role in the angiotensin-renin system that regulates blood pressure and sodium retention by the kidney by converting angiotensin I to angiotensin II, resulting in an increase of the vasoconstrictor activity of angiotensin. Also able to inactivate bradykinin, a potent vasodilator, and therefore enhance the blood pressure response. Acts as a regulator of synaptic transmission by mediating cleavage of neuropeptide hormones, such as substance P, neurotensin or enkephalins. Catalyzes degradation of different enkephalin neuropeptides (Met-enkephalin, Leu-enkephalin, Met-enkephalin-Arg-Phe and possibly Met-enkephalin-Arg-Gly-Leu). Acts as a regulator of synaptic plasticity in the nucleus accumbens of the brain by mediating cleavage of Met-enkephalin-Arg-Phe, a strong ligand of Mu-type opioid receptor OPRM1, into Met-enkephalin. Met-enkephalin-Arg-Phe cleavage by ACE decreases activation of OPRM1, leading to long-term synaptic potentiation of glutamate release. Also acts as a regulator of hematopoietic stem cell differentiation by mediating degradation of hemoregulatory peptide N-acetyl-SDKP (AcSDKP). Acts as a regulator of cannabinoid signaling pathway by mediating degradation of hemopressin, an antagonist peptide of the cannabinoid receptor CNR1. Involved in amyloid-beta metabolism by catalyzing degradation of Amyloid-beta protein 40 and Amyloid-beta protein 42 peptides, thereby preventing plaque formation. Catalyzes cleavage of cholecystokinin (maturation of Cholecystokinin-8 and Cholecystokinin-5) and Gonadoliberin-1 (both maturation and degradation) hormones. Degradation of hemoregulatory peptide N-acetyl-SDKP (AcSDKP) and amyloid-beta proteins is mediated by the N-terminal catalytic domain, while angiotensin I and cholecystokinin cleavage is mediated by the C-terminal catalytic region. Soluble form that is released in blood plasma and other body fluids following proteolytic cleavage in the juxtamembrane stalk region. In terms of biological role, isoform produced by alternative promoter usage that is specifically expressed in spermatocytes and adult testis, and which is required for male fertility. In contrast to somatic isoforms, only contains one catalytic domain. Acts as a dipeptidyl carboxypeptidase that removes dipeptides from the C-terminus of substrates. The identity of substrates that are needed for male fertility is unknown. May also have a glycosidase activity which releases GPI-anchored proteins from the membrane by cleaving the mannose linkage in the GPI moiety. The GPIase activity was reported to be essential for the egg-binding ability of the sperm. This activity is however unclear and has been challenged by other groups, suggesting that it may be indirect. This is Angiotensin-converting enzyme from Pan troglodytes (Chimpanzee).